The sequence spans 1121 residues: PR domain zinc finger protein 10 (1121 aa).

2 disordered regions span residues 1–24 and 92–125; these read MEAK…NTPQ and TEAS…MDDW. Positions 106–124 are enriched in acidic residues; it reads VDSEDEEEDNDSEDSEMDD. The SET domain occupies 173 to 290; sequence LPLVLYIDRF…PKQELKVWYA (118 aa). The segment at 192-295 is N-terminal PR domain; essential for transcriptional activation; it reads IPKRTQFGPL…KVWYAASYAE (104 aa). The C2H2-type 1 zinc finger occupies 319-341; that stretch reads WPCYECNRRFMSSEQLQQHLNMH. 2 disordered regions span residues 350–387 and 419–473; these read RPKS…SADK and ESME…PHLT. A compositionally biased stretch (basic residues) spans 351 to 374; the sequence is PKSRGRGRGRKRFGGARRPGRRTK. 9 consecutive C2H2-type zinc fingers follow at residues 500-522, 529-551, 557-579, 585-608, 613-635, 641-664, 696-719, 741-764, and 803-826; these read FKCP…MRFH, HVCH…LVLH, YSCL…VGIH, FLCP…RSFH, FQCS…MLRH, FLCS…QRMH, FKCR…SKRH, YYCQ…LKNH, and VCCP…RKKH. The C-terminal glutamine-rich region; essential for transcriptional activation stretch occupies residues 871 to 1101; the sequence is QAMTELSQTL…PAGGQQATTQ (231 aa). Positions 1077-1097 are disordered; sequence VPSTATQGHPDPLEQPAGGQQ.

The protein belongs to the class V-like SAM-binding methyltransferase superfamily.

It is found in the nucleus. Transcriptional activator, essential for early embryonic development and survival of embryonic stem cells (ESCs). Supports cell growth and survival during early development by transcriptionally activating the expression of the translation initiation factor EIF3B, to sustain global translation. Activates the transcription of FLNC. This chain is PR domain zinc finger protein 10 (prdm10), found in Danio rerio (Zebrafish).